Consider the following 408-residue polypeptide: Innexin-12 (408 aa).

Residues 29 to 49 traverse the membrane as a helical segment; the sequence is TIGLVLASAFITGWSFVGSPI. Asn99 is a glycosylation site (N-linked (GlcNAc...) asparagine). 3 consecutive transmembrane segments (helical) span residues 113 to 133, 197 to 217, and 284 to 304; these read QWVP…VVIW, VITS…FQFV, and IFVA…TNTI.

This sequence belongs to the pannexin family.

It localises to the cell membrane. It is found in the cell junction. The protein resides in the gap junction. In terms of biological role, structural component of the gap junctions. Plays a role in oocyte directional transit in the spermatheca during ovulation by facilitating the directional propagation of the calcium signal in the spermatheca. Plays a role in male tail tip morphogenesis. The protein is Innexin-12 of Caenorhabditis elegans.